Reading from the N-terminus, the 427-residue chain is Glutamate-1-semialdehyde 2,1-aminomutase (427 aa).

Position 266 is an N6-(pyridoxal phosphate)lysine (Lys266).

The protein belongs to the class-III pyridoxal-phosphate-dependent aminotransferase family. HemL subfamily. Homodimer. Pyridoxal 5'-phosphate is required as a cofactor.

The protein resides in the cytoplasm. The catalysed reaction is (S)-4-amino-5-oxopentanoate = 5-aminolevulinate. Its pathway is porphyrin-containing compound metabolism; protoporphyrin-IX biosynthesis; 5-aminolevulinate from L-glutamyl-tRNA(Glu): step 2/2. The protein is Glutamate-1-semialdehyde 2,1-aminomutase of Dechloromonas aromatica (strain RCB).